The primary structure comprises 478 residues: JmjC domain-containing histone demethylation protein 1 (478 aa).

The PHD-type zinc finger occupies 6-70 (VKCHFCKKDD…HVESFKCTLH (65 aa)). The 160-residue stretch at 242–401 (SHVESFKDGI…TQLNVVEIEH (160 aa)) folds into the JmjC domain. Residue threonine 294 coordinates substrate. Fe cation is bound by residues histidine 297 and aspartate 299. Lysine 314 lines the substrate pocket. Position 369 (histidine 369) interacts with Fe cation.

This sequence belongs to the JHDM1 histone demethylase family. Fe(2+) serves as cofactor.

The protein resides in the nucleus. It catalyses the reaction N(6),N(6)-dimethyl-L-lysyl(36)-[histone H3] + 2 2-oxoglutarate + 2 O2 = L-lysyl(36)-[histone H3] + 2 formaldehyde + 2 succinate + 2 CO2. Functionally, histone demethylase that specifically demethylates 'Lys-36' of histone H3, thereby playing a central role in histone code. The sequence is that of JmjC domain-containing histone demethylation protein 1 (JHD1) from Kluyveromyces lactis (strain ATCC 8585 / CBS 2359 / DSM 70799 / NBRC 1267 / NRRL Y-1140 / WM37) (Yeast).